A 446-amino-acid chain; its full sequence is Na(+)-translocating NADH-quinone reductase subunit A (446 aa).

It belongs to the NqrA family. Composed of six subunits; NqrA, NqrB, NqrC, NqrD, NqrE and NqrF.

The catalysed reaction is a ubiquinone + n Na(+)(in) + NADH + H(+) = a ubiquinol + n Na(+)(out) + NAD(+). Its function is as follows. NQR complex catalyzes the reduction of ubiquinone-1 to ubiquinol by two successive reactions, coupled with the transport of Na(+) ions from the cytoplasm to the periplasm. NqrA to NqrE are probably involved in the second step, the conversion of ubisemiquinone to ubiquinol. This Histophilus somni (strain 2336) (Haemophilus somnus) protein is Na(+)-translocating NADH-quinone reductase subunit A.